A 654-amino-acid chain; its full sequence is tRNA 5-methylaminomethyl-2-thiouridine biosynthesis bifunctional protein MnmC (654 aa).

Residues 1-236 are tRNA (mnm(5)s(2)U34)-methyltransferase; the sequence is MSTLLQHAQI…KWEVMHGVYT (236 aa). The segment at 262–654 is FAD-dependent cmnm(5)s(2)U34 oxidoreductase; that stretch reads IGAGLAGSAT…FALRRLIRGK (393 aa).

In the N-terminal section; belongs to the methyltransferase superfamily. tRNA (mnm(5)s(2)U34)-methyltransferase family. This sequence in the C-terminal section; belongs to the DAO family. Requires FAD as cofactor.

Its subcellular location is the cytoplasm. It carries out the reaction 5-aminomethyl-2-thiouridine(34) in tRNA + S-adenosyl-L-methionine = 5-methylaminomethyl-2-thiouridine(34) in tRNA + S-adenosyl-L-homocysteine + H(+). Functionally, catalyzes the last two steps in the biosynthesis of 5-methylaminomethyl-2-thiouridine (mnm(5)s(2)U) at the wobble position (U34) in tRNA. Catalyzes the FAD-dependent demodification of cmnm(5)s(2)U34 to nm(5)s(2)U34, followed by the transfer of a methyl group from S-adenosyl-L-methionine to nm(5)s(2)U34, to form mnm(5)s(2)U34. This Pseudomonas entomophila (strain L48) protein is tRNA 5-methylaminomethyl-2-thiouridine biosynthesis bifunctional protein MnmC.